A 1070-amino-acid polypeptide reads, in one-letter code: DNA-directed RNA polymerase subunit beta (1070 aa).

The protein belongs to the RNA polymerase beta chain family. In plastids the minimal PEP RNA polymerase catalytic core is composed of four subunits: alpha, beta, beta', and beta''. When a (nuclear-encoded) sigma factor is associated with the core the holoenzyme is formed, which can initiate transcription.

It is found in the plastid. Its subcellular location is the chloroplast. It catalyses the reaction RNA(n) + a ribonucleoside 5'-triphosphate = RNA(n+1) + diphosphate. Its function is as follows. DNA-dependent RNA polymerase catalyzes the transcription of DNA into RNA using the four ribonucleoside triphosphates as substrates. This is DNA-directed RNA polymerase subunit beta from Angiopteris evecta (Mule's foot fern).